Here is a 625-residue protein sequence, read N- to C-terminus: Phosphomethylpyrimidine synthase (625 aa).

Substrate-binding positions include Asn-230, Met-259, Tyr-288, His-324, 344 to 346, 385 to 388, and Glu-424; these read SRG and DGLR. Position 428 (His-428) interacts with Zn(2+). Position 451 (Tyr-451) interacts with substrate. His-492 is a Zn(2+) binding site. Positions 572, 575, and 580 each coordinate [4Fe-4S] cluster.

This sequence belongs to the ThiC family. In terms of assembly, homodimer. [4Fe-4S] cluster is required as a cofactor.

The enzyme catalyses 5-amino-1-(5-phospho-beta-D-ribosyl)imidazole + S-adenosyl-L-methionine = 4-amino-2-methyl-5-(phosphooxymethyl)pyrimidine + CO + 5'-deoxyadenosine + formate + L-methionine + 3 H(+). Its pathway is cofactor biosynthesis; thiamine diphosphate biosynthesis. Functionally, catalyzes the synthesis of the hydroxymethylpyrimidine phosphate (HMP-P) moiety of thiamine from aminoimidazole ribotide (AIR) in a radical S-adenosyl-L-methionine (SAM)-dependent reaction. This Xanthomonas campestris pv. campestris (strain 8004) protein is Phosphomethylpyrimidine synthase.